We begin with the raw amino-acid sequence, 200 residues long: ATP synthase subunit s, mitochondrial (200 aa).

Residues 1–25 (MMMFGKISRQLCSLKKIPWSCDSRY) constitute a mitochondrion transit peptide. An N-terminal domain region spans residues 1-61 (MMMFGKISRQ…SEWLLRCGAK (61 aa)). Gly59 is a binding site for Mg(2+). 4 LRR repeats span residues 62–87 (VRYC…RYKI), 88–116 (QAID…KITL), 117–141 (CKCH…KSLL), and 142–173 (ELEI…LSDL). A Mg(2+)-binding site is contributed by Thr93.

The protein belongs to the ATP synthase subunit s family. Homotetramer. Associates with ATP synthase.

It localises to the mitochondrion. The protein localises to the mitochondrion inner membrane. Involved in regulation of mitochondrial membrane ATP synthase. Necessary for H(+) conduction of ATP synthase. Facilitates energy-driven catalysis of ATP synthesis by blocking a proton leak through an alternative proton exit pathway. The protein is ATP synthase subunit s, mitochondrial (Dmac2l) of Mus musculus (Mouse).